Reading from the N-terminus, the 342-residue chain is Protein RecA (342 aa).

65–72 is a binding site for ATP; sequence GPESSGKT.

This sequence belongs to the RecA family.

The protein resides in the cytoplasm. Can catalyze the hydrolysis of ATP in the presence of single-stranded DNA, the ATP-dependent uptake of single-stranded DNA by duplex DNA, and the ATP-dependent hybridization of homologous single-stranded DNAs. It interacts with LexA causing its activation and leading to its autocatalytic cleavage. This Teredinibacter turnerae (strain ATCC 39867 / T7901) protein is Protein RecA.